We begin with the raw amino-acid sequence, 443 residues long: Anamorsin homolog (443 aa).

An N-terminal SAM-like domain region spans residues 136-301; that stretch reads LSSAPRVLVL…AAGVADALSG (166 aa). The interval 302-331 is linker; it reads NRGALPNGTAQTDGDDFIDESTLIDPTESY. Positions 341, 348, 351, and 353 each coordinate [2Fe-2S] cluster. The tract at residues 341–353 is fe-S binding site A; that stretch reads CASRPKACPNCTC. Positions 380, 383, 391, and 394 each coordinate [4Fe-4S] cluster. 2 consecutive short sequence motifs (cx2C motif) follow at residues 380–383 and 391–394; these read CGNC and CAGC. Positions 380–394 are fe-S binding site B; sequence CGNCYLGDAFRCAGC.

It belongs to the anamorsin family. In terms of assembly, monomer. Requires [2Fe-2S] cluster as cofactor. It depends on [4Fe-4S] cluster as a cofactor.

The protein localises to the cytoplasm. It localises to the mitochondrion intermembrane space. Its function is as follows. Component of the cytosolic iron-sulfur (Fe-S) protein assembly (CIA) machinery. Required for the maturation of extramitochondrial Fe-S proteins. Part of an electron transfer chain functioning in an early step of cytosolic Fe-S biogenesis, facilitating the de novo assembly of a [4Fe-4S] cluster on the cytosolic Fe-S scaffold complex. Electrons are transferred from NADPH via a FAD- and FMN-containing diflavin oxidoreductase. Together with the diflavin oxidoreductase, also required for the assembly of the diferric tyrosyl radical cofactor of ribonucleotide reductase (RNR), probably by providing electrons for reduction during radical cofactor maturation in the catalytic small subunit. The chain is Anamorsin homolog from Toxoplasma gondii (strain ATCC 50861 / VEG).